The primary structure comprises 911 residues: MATPSMLPQWSYMHIAGQDASEYLSPGLVQFAQATESYFNIGNKFRNPTVAPTHDVTTERSQRLQLRFVPVDREDTQYSYKTRFQLAVGDNRVLDMASTYFDIRGTLDRGASFKPYSGTAYNSFAPKSAPNNTQFRQANNGHPAQTIAQASYVATIGGANNDLQMGVDERQLPVYANTTYQPEPQLGIEGWTAGSMAVIDQAGGRVLRNPTQTPCYGSYAKPTNEHGGITKANTQVEKKYYRTGDNGNPETVFYTEEADVLTPDTHLVHAVPAADRAKVEGLSQHAAPNRPNFIGFRDCFVGLMYYNSGGNLGVLAGQSSQLNAVVDLQDRNTELSYQMLLANTTDRSRYFSMWNQAMDSYDPEVRVIDNVGVEDEMPNYCFPLSGVQIGNRSHEVQRNQQQWQNVANSDNNYIGKGNLPAMEINLAANLWRSFLYSNVALYLPDNLKFTPHNIQLPPNTNTYEYMNGRIPVSGLIDTYVNIGTRWSPDVMDNVNPFNHHRNSGLRYRSQLLGNGRFCDFHIQVPQKFFAIRNLLLLPGTYTYEWSFRKDVNMILQSTLGNDLRVDGATVNITSVNLYASFFPMSHNTASTLEAMLRNDTNDQSFNDYLSAANMLYPIPPNATQLPIPSRNWAAFRGWSLTRLKQRETPALGSPFDPYFTYSGTIPYLDGTFYLSHTFRKVAIQFDSSVTWPGNDRLLTPNEFEIKISVDGEGYNVAQSNMTKDWFLVQMLANYNIGYQGYHLPPDYKDRTFSFLHNFIPMCRQVPNPATEGYFGLGIVNHRTTPAYWFRFCRAPREGHPYPQLALPPHWDPRHALRDPERKFLCDRTLWRIPFSSNFMSMGSLTDLGQNLLYANAAHALDMTFEMDPINEPTLLYVLFEVFDVARVHQPHRGVIEVVYLRTPFSAGNATT.

Residue Ala2 is modified to N-acetylalanine; by host. Phosphotyrosine; by host is present on Tyr899.

Belongs to the adenoviridae hexon protein family. In terms of assembly, homotrimer. Interacts with the capsid vertex protein; this interaction binds the peripentonal hexons to the neighboring penton base. Interacts with the hexon-linking protein; this interaction tethers the hexons surrounding the penton to those situated in the central plate of the facet. Interacts with the hexon-interlacing protein; this interaction lashes the hexons together. Interacts with host dyneins DYNC1LI1 and DYNC1I2; this interaction might be involved in intracellular microtubule-dependent transport of incoming viral capsid. Interacts with the shutoff protein; this interaction allows folding and formation of hexons trimers. Interacts with pre-protein VI; this interaction probably allows nuclear import of hexon trimers and possibly pre-capsid assembly.

The protein localises to the virion. Its subcellular location is the host nucleus. Major capsid protein that self-associates to form 240 hexon trimers, each in the shape of a hexagon, building most of the pseudo T=25 capsid. Assembled into trimeric units with the help of the chaperone shutoff protein. Transported by pre-protein VI to the nucleus where it associates with other structural proteins to form an empty capsid. Might be involved, through its interaction with host dyneins, in the intracellular microtubule-dependent transport of incoming viral capsid to the nucleus. This is Hexon protein from Bos taurus (Bovine).